The sequence spans 713 residues: Protein argonaute (713 aa).

Residues 18 to 129 (EFIPKEVHFY…IKNIRKHKVV (112 aa)) are N-terminal domain. A PAZ domain is found at 164–257 (HLWDFVNRDK…FAPQFCNLVF (94 aa)). A binds 3'-end of gDNA region spans residues 213–218 (HIIKYY). Residues 346–488 (DVPEIIRNKN…QIMGKLGIKY (143 aa)) form a mid domain region. In terms of domain architecture, Piwi spans 426 to 699 (CFALIIGKEK…FVKALGKNWK (274 aa)). A divalent metal cation-binding residues include Gln457, Gln479, and Lys483. The interval 457–460 (QNIL) is binds 5'-phosphorylated end of gDNA. Active-site residues include Asp504, Glu541, and Asp570. Asp504 lines the Mn(2+) pocket. Asp570 is a binding site for Mn(2+). Binds 5'-phosphorylated end of gDNA stretches follow at residues 625-632 (HKTPFGSN) and 678-679 (LR). Asp688 is a catalytic residue. Mn(2+) contacts are provided by Asp688 and Ile713.

It belongs to the argonaute family. Long pAgo subfamily. A divalent metal cation serves as cofactor.

DNA cleavage is inhibited by EDTA. Functionally, a DNA-guided ssDNA endonuclease that may play a role in defense against invading genetic elements. Uses short ssDNA sequences as guides (gDNA) to bind complementary target strands, resulting in slicing of the target DNA (tDNA). Endonucleolytically cleaves tDNA (the gDNA indicates where to cleave); two major and two minor products are seen which correspond to cleavage sites between nucleotides 9/10, 10/11, 13/14, and 14/15 downstream of the target residue base-paired with the 5'-end of the gDNA. Efficient guide-dependent tDNA cleavage requires a minimal length of 15 bp and is maximal at 19 bp. Prefers gDNA with 5'-phosphorylated purines and 3'-pyrimidines; changing these bases alters the cleavage activity and patterns. Also has guide-independent activity on tDNA called 'chopping'. Probably a first round of guide-independent activity on an invading plasmid or virus would generate guide DNAs for subsequent, more efficient, guide-dependent degradation of invading nucleic acids. Has no activity on substrate with a mismatch at positions 10 and 11, on ssDNA or RNA, nor on DNA:RNA hybrids. Digests longer (750 bp) dsDNA as well as circular plasmid and naked genomic DNA, but not chromatin, in a guide DNA-independent manner. Addition of endogenous histone A3 protects DNA from cleavage, while cleavage is insensitive to methylation. When plasmid encoding active or mutated protein (Ala-541) is transformed into Sulfolobus acidocaldarius about 25-fold fewer transformants are found with active protein; reduced levels of plasmid are found in wild-type transformed cells. While S.acidocaldarius grows at a similar temperature to M.jannaschii (70 to 80 degrees Celsius) it has very different histone-like proteins, which presumably do not protect against MjAgo. Binds ssDNA, dsDNA and DNA-RNA hybrids; binding is most efficient with dsDNA. The polypeptide is Protein argonaute (Methanocaldococcus jannaschii (strain ATCC 43067 / DSM 2661 / JAL-1 / JCM 10045 / NBRC 100440) (Methanococcus jannaschii)).